A 335-amino-acid polypeptide reads, in one-letter code: Probable peroxidase 26 (335 aa).

Residues 1 to 18 form the signal peptide; that stretch reads MVMIHIFLTVMVVGGVSL. Cystine bridges form between cysteine 46–cysteine 122, cysteine 79–cysteine 84, cysteine 128–cysteine 331, and cysteine 205–cysteine 237. The active site involves arginine 73. Ca(2+) contacts are provided by aspartate 78, valine 81, glycine 83, aspartate 85, and serine 87. Proline 168 serves as a coordination point for substrate. Histidine 198 is a heme b binding site. Residue serine 199 coordinates Ca(2+). Asparagine 216 is a glycosylation site (N-linked (GlcNAc...) asparagine). Aspartate 255 and serine 258 together coordinate Ca(2+). N-linked (GlcNAc...) asparagine glycosylation is found at asparagine 259 and asparagine 273.

It belongs to the peroxidase family. Classical plant (class III) peroxidase subfamily. Requires heme b as cofactor. Ca(2+) is required as a cofactor.

The protein localises to the secreted. It carries out the reaction 2 a phenolic donor + H2O2 = 2 a phenolic radical donor + 2 H2O. Its function is as follows. Removal of H(2)O(2), oxidation of toxic reductants, biosynthesis and degradation of lignin, suberization, auxin catabolism, response to environmental stresses such as wounding, pathogen attack and oxidative stress. The enzyme activity has to be proved. The protein is Probable peroxidase 26 (PER26) of Arabidopsis thaliana (Mouse-ear cress).